A 470-amino-acid polypeptide reads, in one-letter code: UDP-N-acetylmuramate--L-alanine ligase (470 aa).

118–124 contributes to the ATP binding site; the sequence is GTHGKTT.

The protein belongs to the MurCDEF family.

It is found in the cytoplasm. It catalyses the reaction UDP-N-acetyl-alpha-D-muramate + L-alanine + ATP = UDP-N-acetyl-alpha-D-muramoyl-L-alanine + ADP + phosphate + H(+). It participates in cell wall biogenesis; peptidoglycan biosynthesis. Functionally, cell wall formation. The sequence is that of UDP-N-acetylmuramate--L-alanine ligase from Cereibacter sphaeroides (strain KD131 / KCTC 12085) (Rhodobacter sphaeroides).